The chain runs to 118 residues: Large ribosomal subunit protein uL22c (118 aa).

This sequence belongs to the universal ribosomal protein uL22 family. As to quaternary structure, part of the 50S ribosomal subunit.

It localises to the plastid. It is found in the chloroplast. In terms of biological role, this protein binds specifically to 23S rRNA. The globular domain of the protein is located near the polypeptide exit tunnel on the outside of the subunit, while an extended beta-hairpin is found that lines the wall of the exit tunnel in the center of the 70S ribosome. The sequence is that of Large ribosomal subunit protein uL22c (rpl22) from Physcomitrium patens (Spreading-leaved earth moss).